The primary structure comprises 629 residues: uncharacterized protein (629 aa).

His-562 serves as the catalytic Proton acceptor.

The protein belongs to the GMC oxidoreductase family. Requires FAD as cofactor.

This is an uncharacterized protein from Mycobacterium tuberculosis (strain CDC 1551 / Oshkosh).